The sequence spans 315 residues: 4-hydroxy-3-methylbut-2-enyl diphosphate reductase (315 aa).

Residue cysteine 12 participates in [4Fe-4S] cluster binding. (2E)-4-hydroxy-3-methylbut-2-enyl diphosphate-binding residues include histidine 41 and histidine 74. 2 residues coordinate dimethylallyl diphosphate: histidine 41 and histidine 74. Histidine 41 and histidine 74 together coordinate isopentenyl diphosphate. Cysteine 96 is a binding site for [4Fe-4S] cluster. Histidine 124 is a binding site for (2E)-4-hydroxy-3-methylbut-2-enyl diphosphate. Residue histidine 124 participates in dimethylallyl diphosphate binding. Isopentenyl diphosphate is bound at residue histidine 124. Glutamate 126 functions as the Proton donor in the catalytic mechanism. Position 168 (threonine 168) interacts with (2E)-4-hydroxy-3-methylbut-2-enyl diphosphate. Cysteine 198 is a [4Fe-4S] cluster binding site. (2E)-4-hydroxy-3-methylbut-2-enyl diphosphate contacts are provided by serine 226, serine 227, asparagine 228, and serine 270. Dimethylallyl diphosphate-binding residues include serine 226, serine 227, asparagine 228, and serine 270. Isopentenyl diphosphate is bound by residues serine 226, serine 227, asparagine 228, and serine 270.

Belongs to the IspH family. It depends on [4Fe-4S] cluster as a cofactor.

It carries out the reaction isopentenyl diphosphate + 2 oxidized [2Fe-2S]-[ferredoxin] + H2O = (2E)-4-hydroxy-3-methylbut-2-enyl diphosphate + 2 reduced [2Fe-2S]-[ferredoxin] + 2 H(+). The enzyme catalyses dimethylallyl diphosphate + 2 oxidized [2Fe-2S]-[ferredoxin] + H2O = (2E)-4-hydroxy-3-methylbut-2-enyl diphosphate + 2 reduced [2Fe-2S]-[ferredoxin] + 2 H(+). It participates in isoprenoid biosynthesis; dimethylallyl diphosphate biosynthesis; dimethylallyl diphosphate from (2E)-4-hydroxy-3-methylbutenyl diphosphate: step 1/1. Its pathway is isoprenoid biosynthesis; isopentenyl diphosphate biosynthesis via DXP pathway; isopentenyl diphosphate from 1-deoxy-D-xylulose 5-phosphate: step 6/6. Functionally, catalyzes the conversion of 1-hydroxy-2-methyl-2-(E)-butenyl 4-diphosphate (HMBPP) into a mixture of isopentenyl diphosphate (IPP) and dimethylallyl diphosphate (DMAPP). Acts in the terminal step of the DOXP/MEP pathway for isoprenoid precursor biosynthesis. The polypeptide is 4-hydroxy-3-methylbut-2-enyl diphosphate reductase (Pseudomonas syringae pv. syringae (strain B728a)).